Here is a 1259-residue protein sequence, read N- to C-terminus: Zinc finger protein BRUTUS-like At1g74770 (1259 aa).

Residues 441–461 form a helical membrane-spanning segment; sequence LLYTSIHVLPLGLLKCVILWF. 2 stretches are compositionally biased toward basic and acidic residues: residues 904-916 and 924-934; these read KEEK…ESKK and EGDKEQTDKMS. A disordered region spans residues 904–938; sequence KEEKDLERSESKKICRGSNQEGDKEQTDKMSQKVS. The CHY-type zinc-finger motif lies at 1018-1087; it reads PHSLIFGCNH…ANCSNTSCKS (70 aa). Zn(2+)-binding residues include Cys1025, His1027, Cys1038, Cys1039, Cys1045, Cys1048, His1049, His1055, Cys1067, Cys1070, Cys1080, Cys1085, Cys1094, Cys1097, His1108, Cys1109, Cys1112, Cys1115, His1127, Cys1128, Cys1131, Cys1134, His1142, and Cys1144. The CTCHY-type zinc-finger motif lies at 1089 to 1152; that stretch reads MGKYFCKICK…VCREKCLEDN (64 aa). An RING-type; atypical zinc finger spans residues 1153 to 1195; sequence CPICHEYIFTSSSPVKALPCGHLMHSTCFQEYTCSHYTCPVCS.

Binds zinc and iron ions.

It is found in the membrane. Its subcellular location is the nucleus. Its pathway is protein modification; protein ubiquitination. In terms of biological role, probable E3 ubiquitin-protein ligase that may regulate the response to iron deficiency and thus contributes to iron homeostasis. The chain is Zinc finger protein BRUTUS-like At1g74770 from Arabidopsis thaliana (Mouse-ear cress).